The following is a 76-amino-acid chain: Envelope small membrane protein (76 aa).

The Virion surface segment spans residues Met-1–Ser-16. A helical membrane pass occupies residues Val-17–Leu-37. At Arg-38–Val-76 the chain is on the intravirion side.

The protein belongs to the betacoronaviruses E protein family. Homopentamer. Interacts with membrane protein M in the budding compartment of the host cell, which is located between endoplasmic reticulum and the Golgi complex. Interacts with Nucleoprotein.

It localises to the host Golgi apparatus membrane. Its function is as follows. Plays a central role in virus morphogenesis and assembly. Acts as a viroporin and self-assembles in host membranes forming pentameric protein-lipid pores that allow ion transport. Also plays a role in the induction of apoptosis. The protein is Envelope small membrane protein of Rhinolophus sinicus (Chinese rufous horseshoe bat).